A 154-amino-acid polypeptide reads, in one-letter code: MLYLTRRVETPAQTTASVTLPVDMRVKSRIKVTLNDGRQAGLLLPRGLLLRDGDILSNENGDEFIKVIAADEAVSVVRCADPFMLAKACWHLGNRHVPLQIMPGELRYHHDHVLDDMLRQFGLDVDFAHLPFEPEAGAYASKSHAHNHDQEHSH.

Belongs to the UreE family.

Its subcellular location is the cytoplasm. In terms of biological role, involved in urease metallocenter assembly. Binds nickel. Probably functions as a nickel donor during metallocenter assembly. The polypeptide is Urease accessory protein UreE (Escherichia coli O157:H7).